We begin with the raw amino-acid sequence, 807 residues long: Serine/threonine-protein kinase B-raf (807 aa).

Composition is skewed to low complexity over residues methionine 1 to leucine 15 and serine 110 to leucine 128. Disordered stretches follow at residues methionine 1–serine 36 and glycine 104–leucine 128. The 73-residue stretch at proline 155 to leucine 227 folds into the RBD domain. Residues threonine 234–cysteine 280 form a Phorbol-ester/DAG-type zinc finger. Positions 235, 248, 251, 261, 264, 269, 272, and 280 each coordinate Zn(2+). A compositionally biased stretch (polar residues) spans glutamate 303–alanine 313. 2 disordered regions span residues glutamate 303–asparagine 372 and serine 434–aspartate 494. Low complexity predominate over residues serine 314 to proline 328. Composition is skewed to basic and acidic residues over residues proline 348–serine 363 and glutamine 463–serine 487. One can recognise a Protein kinase domain in the interval isoleucine 497 to leucine 757. ATP contacts are provided by residues isoleucine 503–valine 511 and lysine 523. Catalysis depends on aspartate 616, which acts as the Proton acceptor. Serine 790 bears the Phosphoserine; by MAPK1 mark. Threonine 793 carries the post-translational modification Phosphothreonine; by MAPK1.

This sequence belongs to the protein kinase superfamily. TKL Ser/Thr protein kinase family. RAF subfamily. Requires Zn(2+) as cofactor. In terms of processing, phosphorylated. In terms of tissue distribution, expressed preferentially in neural tissue.

It localises to the nucleus. It is found in the cytoplasm. The protein localises to the cell membrane. It catalyses the reaction L-seryl-[protein] + ATP = O-phospho-L-seryl-[protein] + ADP + H(+). The enzyme catalyses L-threonyl-[protein] + ATP = O-phospho-L-threonyl-[protein] + ADP + H(+). Its activity is regulated as follows. In quiescent cells, maintained in an inactive state via an intramolecular interaction between the protein kinase and N-terminal domains. Following mitogen-mediated cell activation, binds via its RGB domain to active HRAS (GTP-bound) which releases the inhibitory intramolecular interaction between the two domains. This allows the MAP2K1-mediated dimerization of KSR1 or KSR2, and BRAF which activates BRAF. Its function is as follows. Protein kinase involved in the activation of the MAP signaling cascade. May play a role in transducing specific signals in neural cells. The chain is Serine/threonine-protein kinase B-raf from Coturnix japonica (Japanese quail).